The following is a 312-amino-acid chain: Methionyl-tRNA formyltransferase (312 aa).

109–112 lines the (6S)-5,6,7,8-tetrahydrofolate pocket; that stretch reads SLLP.

This sequence belongs to the Fmt family.

The enzyme catalyses L-methionyl-tRNA(fMet) + (6R)-10-formyltetrahydrofolate = N-formyl-L-methionyl-tRNA(fMet) + (6S)-5,6,7,8-tetrahydrofolate + H(+). In terms of biological role, attaches a formyl group to the free amino group of methionyl-tRNA(fMet). The formyl group appears to play a dual role in the initiator identity of N-formylmethionyl-tRNA by promoting its recognition by IF2 and preventing the misappropriation of this tRNA by the elongation apparatus. This Listeria monocytogenes serotype 4a (strain HCC23) protein is Methionyl-tRNA formyltransferase.